Here is a 101-residue protein sequence, read N- to C-terminus: Integration host factor subunit alpha (101 aa).

The protein belongs to the bacterial histone-like protein family. Heterodimer of an alpha and a beta chain.

This protein is one of the two subunits of integration host factor, a specific DNA-binding protein that functions in genetic recombination as well as in transcriptional and translational control. The chain is Integration host factor subunit alpha from Alkalilimnicola ehrlichii (strain ATCC BAA-1101 / DSM 17681 / MLHE-1).